The primary structure comprises 942 residues: MKSPAPAHMWNLVLFLPSLLAVLPTTTAEKNGIDIYSLTVDSRVSSRFAHTVVTSRVVNRADAVQEATFQVELPRKAFITNFSMIIDGVTYPGVVKEKAEAQKQYSAAVGRGESAGIVKTTGRQTEKFEVSVNVAPGSKITFELIYQELLQRRLGMYELLLKVRPQQLVKHLQMDIYIFEPQGISILETESTFMTPELANALTTSQNKTKAHIRFKPTLSQQQKSQSEQDTVLNGDFIVRYDVNRSDSGGSIQIEEGYFVHHFAPENLPTMSKNVIFVIDKSGSMSGKKIQQTREALVKILKDLSPQDQFNLIEFSGEANQWKQSLVQATEENLNKAVNYASRIRAHGGTNINNAVLLAVELLDRSNQAELLPSKSVSLIILLTDGDPTVGETNPTIIQNNVREAINGQYSLFCLGFGFDVNYPFLEKMALDNGGLARRIYEDSDSALQLQDFYHEVANPLLSSVAFEYPSDAVEEVTRYKFQHHFKGSEMVVAGKLQDQGPDVLLAKVSGQMHMQNITFQTEASVAQQEKEFKSPKYIFHNFMERLWALLTIQQQLEQRISASGAELEALEAQVLNLSLKYNFVTPLTHMVVTKPEGQEQFQVAEKPVEVGDGMQRLPLAAQAHPFRPPVRGSKLMTVLKGSRSQIPRLGDAVRASRQYIPPGFPGPPGPPGFPAPPGPPGFPAPPGPPLASGSDFSLQPSYERMLSLPSVAAQYPADPHLVVTEKSKESTIPEESPNPDHPQVPTITLPLPGSSVDQLCVDILHSEKPMKLFVDPSQGLEVTGKYENTGFSWLEVTIQKPHLQVHATPERLVVTRGRKNTEYKWKKTLFSVLPGLKMTMNMMGLLQLSGPDKVTIGLLSLDDPQRGLMLLLNDTQHFSNNVKGELGQFYRDIVWEPPVEPDNTKRTVKVQGVDYLATRELKLSYQEGFPGAEISCWTVEI.

The signal sequence occupies residues 1-28; that stretch reads MKSPAPAHMWNLVLFLPSLLAVLPTTTA. One can recognise a VIT domain in the interval 29–148; sequence EKNGIDIYSL…KITFELIYQE (120 aa). A glycan (N-linked (GlcNAc...) asparagine) is linked at Asn-81. In terms of domain architecture, VWFA spans 274–457; the sequence is NVIFVIDKSG…LQLQDFYHEV (184 aa). Asn-517 and Asn-577 each carry an N-linked (GlcNAc...) asparagine glycan. Positions 552-586 form a coiled coil; sequence TIQQQLEQRISASGAELEALEAQVLNLSLKYNFVT. Disordered regions lie at residues 658 to 698 and 726 to 745; these read RQYI…SDFS and EKSKESTIPEESPNPDHPQV. Positions 663–690 are enriched in pro residues; the sequence is PGFPGPPGPPGFPAPPGPPGFPAPPGPP. O-linked (GalNAc...) threonine glycosylation is present at Thr-732. A disulfide bridge connects residues Cys-761 and Cys-937. Asn-874 carries an N-linked (GlcNAc...) asparagine glycan.

Belongs to the ITIH family. In terms of assembly, interacts (via C-terminus) with DNAJC1 (via SANT 2 domain). May be O-glycosylated. N-glycosylated. Highly expressed in liver. Weak expression in lung and heart.

Its subcellular location is the secreted. Functionally, type II acute-phase protein (APP) involved in inflammatory responses to trauma. May also play a role in liver development or regeneration. The sequence is that of Inter alpha-trypsin inhibitor, heavy chain 4 (Itih4) from Mus musculus (Mouse).